The primary structure comprises 172 residues: 3-hydroxydecanoyl-[acyl-carrier-protein] dehydratase (172 aa).

His71 is an active-site residue.

This sequence belongs to the thioester dehydratase family. FabA subfamily. Homodimer.

It is found in the cytoplasm. It carries out the reaction a (3R)-hydroxyacyl-[ACP] = a (2E)-enoyl-[ACP] + H2O. It catalyses the reaction (3R)-hydroxydecanoyl-[ACP] = (2E)-decenoyl-[ACP] + H2O. The enzyme catalyses (2E)-decenoyl-[ACP] = (3Z)-decenoyl-[ACP]. Its pathway is lipid metabolism; fatty acid biosynthesis. Necessary for the introduction of cis unsaturation into fatty acids. Catalyzes the dehydration of (3R)-3-hydroxydecanoyl-ACP to E-(2)-decenoyl-ACP and then its isomerization to Z-(3)-decenoyl-ACP. Can catalyze the dehydratase reaction for beta-hydroxyacyl-ACPs with saturated chain lengths up to 16:0, being most active on intermediate chain length. This Pectobacterium atrosepticum (strain SCRI 1043 / ATCC BAA-672) (Erwinia carotovora subsp. atroseptica) protein is 3-hydroxydecanoyl-[acyl-carrier-protein] dehydratase.